Consider the following 29-residue polypeptide: Potassium channel toxin alpha-KTx 8.4 (29 aa).

Intrachain disulfides connect Cys-3/Cys-19, Cys-6/Cys-24, and Cys-10/Cys-26.

It belongs to the short scorpion toxin superfamily. Potassium channel inhibitor family. Alpha-KTx 08 subfamily. In terms of tissue distribution, expressed by the venom gland.

It is found in the secreted. Functionally, inhibits voltage-gated potassium channels. This chain is Potassium channel toxin alpha-KTx 8.4, found in Leiurus hebraeus (Hebrew deathstalker scorpion).